A 392-amino-acid chain; its full sequence is MKPSPSFPEPVLIETTEALAALCDRLAAEPFVTVDTEFMREKTYFPELCVVQLGGANDVAVIDAQAEGLDLAPLGALFANPAVTKVFHACRQDIEIFLLKFGAVPAPLFDTQVAAMVAGFGDQVGYDTLVSSLAGGRIDKAHRFSDWSARPLSRAQIAYAAADVTWLRPVYEGLRARLTREGRLDWVAEEAAVLADPATYRTEPEDAWRRLKLRGGNRRQLALVKAIAAWREREAMRVNVPRQRIVRDEQIPELAALAPADAEGLTRVRGISSGFAGGKSGRALLEVIASTKAIPDAELPEAPRAPESARPPAGLVALLKVLLAERAGANHVAARLIASAEDIDRLASEDAPNLPCLQGWRAELFGNDALRLKGGRIALAARGRRVEVVDLP.

The 3'-5' exonuclease domain occupies 12-178 (LIETTEALAA…PVYEGLRARL (167 aa)). The HRDC domain maps to 217-298 (NRRQLALVKA…ASTKAIPDAE (82 aa)).

This sequence belongs to the RNase D family. It depends on a divalent metal cation as a cofactor.

The protein resides in the cytoplasm. It carries out the reaction Exonucleolytic cleavage that removes extra residues from the 3'-terminus of tRNA to produce 5'-mononucleotides.. In terms of biological role, exonuclease involved in the 3' processing of various precursor tRNAs. Initiates hydrolysis at the 3'-terminus of an RNA molecule and releases 5'-mononucleotides. The sequence is that of Ribonuclease D from Acidiphilium cryptum (strain JF-5).